The sequence spans 156 residues: Transcription antitermination protein NusB (156 aa).

This sequence belongs to the NusB family.

In terms of biological role, involved in transcription antitermination. Required for transcription of ribosomal RNA (rRNA) genes. Binds specifically to the boxA antiterminator sequence of the ribosomal RNA (rrn) operons. The sequence is that of Transcription antitermination protein NusB from Bartonella tribocorum (strain CIP 105476 / IBS 506).